Here is a 760-residue protein sequence, read N- to C-terminus: MKLNVDGLLVYFPYDYIYPEQFSYMLELKRTLDAKGHGVLEMPSGTGKTVSLLALIMAYQRAYPLEVTKLIYCSRTVPEIEKVIEELRKLLSFYEKQEGEKLPFLGLALSSRKNLCIHPEVTPLRFGKDVDGKCHSLTASYVRAQYQRDSSLPHCRFYEEFDVHGRQVPLPTGIYNLDDLKAVGRRQGWCPYFLARYSILHANVVVYSYHYLLDPKIADLVSKELARKAVVVFDEAHNIDNVCIDSMSVNLTRRTLDRCQANLETLQKTVLRIKETDEQRLREEYRRLVEGLREASAARETDAHLANPVLPDEVLKEAVPGSIRTAEHFLGFLRRLLEYVKWRLRVQHVVQESPPAFLSGLAQRVCIQRKPLRFCAERLRSLLYTLEISDLTDFSPLTLLANFATLVSTYAKGFTIIIEPFDDRTPTIANPILHFSCMDASLAIKPVFERFQSVIITSGTLSPLDIYPKILDFHPVTMATFTMTLARVCLCPMIIGRGNDQVAISSKFETREDIAVIRNYGNLLLEMSAVVPDGIVAFFTSYQYMESTVASWYEQGILENIQRNKLLFIETQDGAETSVALEKYQEACENGRGAILLSVARGKVSEGIDFVHHYGRAVIMFGVPYVYTQSRILKARLEYLRDQFQIRENDFLTFDAMRHAAQCVGRAIRGKTDYGLMVFADKRFARADKRGKLPRWIQEHLTDANLNLTVDEGVQVAKYFLRQMAQPFHREDQLGLSLLSLEQLESEETLRRIEQIAQQL.

In terms of domain architecture, Helicase ATP-binding spans 7-283; it reads GLLVYFPYDY…KETDEQRLRE (277 aa). Residue 42-49 participates in ATP binding; the sequence is MPSGTGKT. [4Fe-4S] cluster is bound by residues cysteine 116, cysteine 134, cysteine 155, and cysteine 190. A DEAH box motif is present at residues 234–237; the sequence is DEAH. The interval 438-637 is mediates interaction with MMS19; the sequence is MDASLAIKPV…TQSRILKARL (200 aa). The Nuclear localization signal motif lies at 682-695; the sequence is KRFARADKRGKLPR.

Belongs to the helicase family. RAD3/XPD subfamily. As to quaternary structure, component of the 7-subunit TFIIH core complex composed of XPB/ERCC3, XPD/ERCC2, GTF2H1, GTF2H2, GTF2H3, GTF2H4 and GTF2H5, which is active in NER. The core complex associates with the 3-subunit CDK-activating kinase (CAK) module composed of CCNH/cyclin H, CDK7 and MNAT1 to form the 10-subunit holoenzyme (holo-TFIIH) active in transcription. The interaction with GTF2H2 results in the stimulation of the 5'--&gt;3' helicase activity. Component of the MMXD complex, which includes CIAO1, ERCC2, CIAO2B, MMS19 and SLC25A5. Interacts with CIAO1 and CIAO2B; the interaction WITH CIAO2B is direct. Interacts with ATF7IP. Interacts directly with MMS19. Part of TBP-based Pol II pre-initiation complex (PIC), in which Pol II core assembles with general transcription factors and other specific initiation factors including GTF2E1, GTF2E2, GTF2F1, GTF2F2, TCEA1, ERCC2, ERCC3, GTF2H2, GTF2H3, GTF2H4, GTF2H5, GTF2A1, GTF2A2, GTF2B and TBP; this large multi-subunit PIC complex mediates DNA unwinding and targets Pol II core to the transcription start site where the first phosphodiester bond forms. The cofactor is Mg(2+). [4Fe-4S] cluster is required as a cofactor. In terms of processing, ISGylated.

It is found in the nucleus. The protein resides in the cytoplasm. It localises to the cytoskeleton. The protein localises to the spindle. The enzyme catalyses Couples ATP hydrolysis with the unwinding of duplex DNA at the replication fork by translocating in the 5'-3' direction. This creates two antiparallel DNA single strands (ssDNA). The leading ssDNA polymer is the template for DNA polymerase III holoenzyme which synthesizes a continuous strand.. It catalyses the reaction ATP + H2O = ADP + phosphate + H(+). In terms of biological role, ATP-dependent 5'-3' DNA helicase, component of the general transcription and DNA repair factor IIH (TFIIH) core complex, which is involved in general and transcription-coupled nucleotide excision repair (NER) of damaged DNA and, when complexed to CDK-activating kinase (CAK), involved in transcription by RNA polymerase II. In NER, TFIIH acts by opening DNA around the lesion to allow the excision of the damaged oligonucleotide and its replacement by a new DNA fragment. The ATP-dependent helicase activity of XPD/ERCC2 is required for DNA opening. In transcription, TFIIH has an essential role in transcription initiation. When the pre-initiation complex (PIC) has been established, TFIIH is required for promoter opening and promoter escape. Phosphorylation of the C-terminal tail (CTD) of the largest subunit of RNA polymerase II by the kinase module CAK controls the initiation of transcription. XPD/ERCC2 acts by forming a bridge between CAK and the core-TFIIH complex. Involved in the regulation of vitamin-D receptor activity. As part of the mitotic spindle-associated MMXD complex it plays a role in chromosome segregation. Might have a role in aging process and could play a causative role in the generation of skin cancers. This chain is General transcription and DNA repair factor IIH helicase subunit XPD (ERCC2), found in Bos taurus (Bovine).